We begin with the raw amino-acid sequence, 184 residues long: Large ribosomal subunit protein eL14 (184 aa).

The segment at 149 to 184 is disordered; that stretch reads KNAKKVDSTPAAKKRIEKARAARKAKPTAAKEKSKK. Positions 160–174 are enriched in basic residues; it reads AKKRIEKARAARKAK.

It belongs to the eukaryotic ribosomal protein eL14 family.

This chain is Large ribosomal subunit protein eL14, found in Trypanosoma congolense.